A 333-amino-acid chain; its full sequence is Ketol-acid reductoisomerase (NADP(+)) (333 aa).

Residues 2-182 (ANIYYDADCD…GGGRAGILET (181 aa)) enclose the KARI N-terminal Rossmann domain. NADP(+) contacts are provided by residues 25–28 (YGSQ), K48, S51, S53, and 83–86 (DTIQ). H108 is a catalytic residue. Residue G134 coordinates NADP(+). Residues 183–331 (SFREETETDL…KKLRSMMKWL (149 aa)) form the KARI C-terminal knotted domain. Mg(2+)-binding residues include D191, E195, E227, and E231. S252 serves as a coordination point for substrate.

The protein belongs to the ketol-acid reductoisomerase family. Mg(2+) serves as cofactor.

It catalyses the reaction (2R)-2,3-dihydroxy-3-methylbutanoate + NADP(+) = (2S)-2-acetolactate + NADPH + H(+). The catalysed reaction is (2R,3R)-2,3-dihydroxy-3-methylpentanoate + NADP(+) = (S)-2-ethyl-2-hydroxy-3-oxobutanoate + NADPH + H(+). It participates in amino-acid biosynthesis; L-isoleucine biosynthesis; L-isoleucine from 2-oxobutanoate: step 2/4. The protein operates within amino-acid biosynthesis; L-valine biosynthesis; L-valine from pyruvate: step 2/4. Its function is as follows. Involved in the biosynthesis of branched-chain amino acids (BCAA). Catalyzes an alkyl-migration followed by a ketol-acid reduction of (S)-2-acetolactate (S2AL) to yield (R)-2,3-dihydroxy-isovalerate. In the isomerase reaction, S2AL is rearranged via a Mg-dependent methyl migration to produce 3-hydroxy-3-methyl-2-ketobutyrate (HMKB). In the reductase reaction, this 2-ketoacid undergoes a metal-dependent reduction by NADPH to yield (R)-2,3-dihydroxy-isovalerate. The polypeptide is Ketol-acid reductoisomerase (NADP(+)) (Leptospira borgpetersenii serovar Hardjo-bovis (strain JB197)).